The primary structure comprises 425 residues: Serine--tRNA ligase (425 aa).

Residue 231 to 233 (TAE) coordinates L-serine. 262–264 (RRE) contributes to the ATP binding site. Glutamate 285 contributes to the L-serine binding site. 349 to 352 (EISS) provides a ligand contact to ATP. Serine 385 lines the L-serine pocket.

Belongs to the class-II aminoacyl-tRNA synthetase family. Type-1 seryl-tRNA synthetase subfamily. As to quaternary structure, homodimer. The tRNA molecule binds across the dimer.

The protein localises to the cytoplasm. It carries out the reaction tRNA(Ser) + L-serine + ATP = L-seryl-tRNA(Ser) + AMP + diphosphate + H(+). The catalysed reaction is tRNA(Sec) + L-serine + ATP = L-seryl-tRNA(Sec) + AMP + diphosphate + H(+). It participates in aminoacyl-tRNA biosynthesis; selenocysteinyl-tRNA(Sec) biosynthesis; L-seryl-tRNA(Sec) from L-serine and tRNA(Sec): step 1/1. Its function is as follows. Catalyzes the attachment of serine to tRNA(Ser). Is also able to aminoacylate tRNA(Sec) with serine, to form the misacylated tRNA L-seryl-tRNA(Sec), which will be further converted into selenocysteinyl-tRNA(Sec). This is Serine--tRNA ligase from Aquifex aeolicus (strain VF5).